Here is a 91-residue protein sequence, read N- to C-terminus: Small ribosomal subunit protein uS19 (91 aa).

The protein belongs to the universal ribosomal protein uS19 family.

Functionally, protein S19 forms a complex with S13 that binds strongly to the 16S ribosomal RNA. The chain is Small ribosomal subunit protein uS19 from Ralstonia nicotianae (strain ATCC BAA-1114 / GMI1000) (Ralstonia solanacearum).